Reading from the N-terminus, the 591-residue chain is V-type ATP synthase alpha chain (591 aa).

An ATP-binding site is contributed by 233–240 (GPFGAGKT).

It belongs to the ATPase alpha/beta chains family.

It carries out the reaction ATP + H2O + 4 H(+)(in) = ADP + phosphate + 5 H(+)(out). Functionally, produces ATP from ADP in the presence of a proton gradient across the membrane. The V-type alpha chain is a catalytic subunit. The protein is V-type ATP synthase alpha chain of Streptococcus pyogenes serotype M2 (strain MGAS10270).